Here is a 412-residue protein sequence, read N- to C-terminus: Argininosuccinate synthase (412 aa).

ATP contacts are provided by residues 12 to 20 (AYSGGLDTS) and Ala-39. Residues Tyr-91 and Ser-96 each coordinate L-citrulline. Position 121 (Gly-121) interacts with ATP. Thr-123, Asn-127, and Asp-128 together coordinate L-aspartate. Asn-127 is an L-citrulline binding site. Positions 131, 180, 189, 265, and 277 each coordinate L-citrulline.

This sequence belongs to the argininosuccinate synthase family. Type 1 subfamily. Homotetramer.

The protein localises to the cytoplasm. The enzyme catalyses L-citrulline + L-aspartate + ATP = 2-(N(omega)-L-arginino)succinate + AMP + diphosphate + H(+). Its pathway is amino-acid biosynthesis; L-arginine biosynthesis; L-arginine from L-ornithine and carbamoyl phosphate: step 2/3. The chain is Argininosuccinate synthase from Pseudoalteromonas atlantica (strain T6c / ATCC BAA-1087).